The sequence spans 254 residues: E3 ubiquitin-protein ligase NEURL3 (254 aa).

Residues 17-174 form the NHR domain; it reads ALSFHGDATG…TTKAIELLDP (158 aa). The RING-type zinc finger occupies 197 to 236; that stretch reads CVICFHNTANTRLMPCGHSQFCGSCAWHIFKDTARCPMCR.

The protein localises to the cytoplasm. The catalysed reaction is S-ubiquitinyl-[E2 ubiquitin-conjugating enzyme]-L-cysteine + [acceptor protein]-L-lysine = [E2 ubiquitin-conjugating enzyme]-L-cysteine + N(6)-ubiquitinyl-[acceptor protein]-L-lysine.. Its pathway is protein modification; protein ubiquitination. Its function is as follows. E3 ubiquitin-protein ligase that plays a role in various biological processes such as lung development or innate immunity. Seems to utilize UBE2E1. Promotes innate antiviral response by catalyzing 'Lys-63'-linked ubiquitination of IRF7. Also inhibits hepatitis C virus assembly by directly binding to viral E1 envelope glycoprotein to disrupt its interaction with E2. Plays an essential role in TLR4-mediated activation of MAPK pathways by promoting 'Lys-48'-linked polyubiquitination of the phosphatase DUSP1/MKP1. This Rattus norvegicus (Rat) protein is E3 ubiquitin-protein ligase NEURL3 (Neurl3).